Consider the following 78-residue polypeptide: MSRVCQVTGKRPAVGNNRSHAKNATKRRFLPNLQTHRFWVESEKRFVKLRLTAKGMRIIDKKGIDAVLVEIRARGENV.

The tract at residues 1 to 25 (MSRVCQVTGKRPAVGNNRSHAKNAT) is disordered.

Belongs to the bacterial ribosomal protein bL28 family.

This chain is Large ribosomal subunit protein bL28, found in Vibrio cholerae serotype O1 (strain ATCC 39541 / Classical Ogawa 395 / O395).